Consider the following 132-residue polypeptide: Myelin P2 protein (132 aa).

The residue at position 2 (Ser2) is an N-acetylserine. (9Z)-octadecenoate-binding positions include Arg107 and 127–129; that span reads RIY. Residues Arg107 and 127 to 129 contribute to the hexadecanoate site; that span reads RIY.

It belongs to the calycin superfamily. Fatty-acid binding protein (FABP) family. In terms of assembly, monomer.

It localises to the cytoplasm. Functionally, may play a role in lipid transport protein in Schwann cells. May bind cholesterol. This is Myelin P2 protein (Pmp2) from Mus musculus (Mouse).